The sequence spans 643 residues: MHGLLLAGLLALPLNVLAHPTESHSSGISRRAIDITSYRLPQISKYTKSDAVPKQDDESFTTSSTGDDNVSSGDYVTTATDWLKKTLPKATYRLVNDHYIGDSGIGHVHFRQTAHGIDIDNTDFNVNIGRDGKVFSFGNSFYDGEIPKANPMVKRDFSDPVNALQGAIQTLNLPVTAKPENVKAKPVEGKENFKFEGTSGAFSDPKAQLVYLQKDGGLVLSWKVETDIGDNWLLTYVDANKNDKVHSVVDYVSAAEYKVYPWGINDPTEGNRTSIHLPWFKTLSTDWHIDGKGWYSTTRGNNAIAQENPTGGPEYENNYRPKSPLFIFKYPYSEAMTPPSSYRDASITQLFYTTNVYHDVLYILGFNEKAGNFQVNNWNKGGVGGDFAILNSQDGSGVNNANFATPPDGQPGRMRMYTWNASTPERDGCFEAGIVIHEYTHGVSNRLTGGPANSRCLAALESGGMGEGWSDFFATAIRLKAGDTRATDYTMGEWASNRPNGIRKYRYSTNLTTNPHMYVDADGLTSVHAIGTIWASMLYELLWNLIDKHGKGNVTKVRPVLKNGVPTDGRHLAMKLVLDGMALQPCLPNFVQARDAILDADKVLTQGSNKCEIWKAFAKRGLGVGAVFNPSKRTGSNELPAGC.

Positions 1–18 (MHGLLLAGLLALPLNVLA) are cleaved as a signal peptide. A propeptide spanning residues 19–254 (HPTESHSSGI…VHSVVDYVSA (236 aa)) is cleaved from the precursor. Residues 47–57 (TKSDAVPKQDD) show a composition bias toward basic and acidic residues. A disordered region spans residues 47–71 (TKSDAVPKQDDESFTTSSTGDDNVS). Residues 60–71 (FTTSSTGDDNVS) are compositionally biased toward polar residues. 2 N-linked (GlcNAc...) asparagine glycosylation sites follow: asparagine 271 and asparagine 420. A Zn(2+)-binding site is contributed by histidine 437. Glutamate 438 is an active-site residue. Residue histidine 441 participates in Zn(2+) binding. N-linked (GlcNAc...) asparagine glycans are attached at residues asparagine 510 and asparagine 553.

Belongs to the peptidase M36 family. Zn(2+) is required as a cofactor.

It localises to the secreted. Its function is as follows. Secreted metalloproteinase probably acting as a virulence factor. This Arthroderma benhamiae (Trichophyton mentagrophytes) protein is Extracellular metalloproteinase 4 (MEP4).